A 287-amino-acid polypeptide reads, in one-letter code: 2-dehydro-3-deoxyphosphooctonate aldolase (287 aa).

It belongs to the KdsA family.

Its subcellular location is the cytoplasm. The catalysed reaction is D-arabinose 5-phosphate + phosphoenolpyruvate + H2O = 3-deoxy-alpha-D-manno-2-octulosonate-8-phosphate + phosphate. It functions in the pathway carbohydrate biosynthesis; 3-deoxy-D-manno-octulosonate biosynthesis; 3-deoxy-D-manno-octulosonate from D-ribulose 5-phosphate: step 2/3. It participates in bacterial outer membrane biogenesis; lipopolysaccharide biosynthesis. In Caulobacter vibrioides (strain ATCC 19089 / CIP 103742 / CB 15) (Caulobacter crescentus), this protein is 2-dehydro-3-deoxyphosphooctonate aldolase.